A 688-amino-acid polypeptide reads, in one-letter code: Glycine--tRNA ligase beta subunit (688 aa).

Belongs to the class-II aminoacyl-tRNA synthetase family. As to quaternary structure, tetramer of two alpha and two beta subunits.

It is found in the cytoplasm. The catalysed reaction is tRNA(Gly) + glycine + ATP = glycyl-tRNA(Gly) + AMP + diphosphate. This Listeria monocytogenes serotype 4a (strain HCC23) protein is Glycine--tRNA ligase beta subunit.